A 141-amino-acid polypeptide reads, in one-letter code: Large ribosomal subunit protein uL16 (141 aa).

This sequence belongs to the universal ribosomal protein uL16 family. As to quaternary structure, part of the 50S ribosomal subunit.

Binds 23S rRNA and is also seen to make contacts with the A and possibly P site tRNAs. In Campylobacter jejuni subsp. jejuni serotype O:6 (strain 81116 / NCTC 11828), this protein is Large ribosomal subunit protein uL16.